The primary structure comprises 96 residues: UPF0235 protein YggU (96 aa).

The protein belongs to the UPF0235 family.

The polypeptide is UPF0235 protein YggU (Escherichia coli O157:H7).